We begin with the raw amino-acid sequence, 312 residues long: Fasciclin-like arabinogalactan protein elcF (312 aa).

The first 16 residues, 1-16 (MKLFTLLLPALTSAHS), serve as a signal peptide directing secretion. FAS1 domains are found at residues 17-160 (LSTL…NASM) and 162-289 (LPHN…DKVL). Residues asparagine 48, asparagine 68, asparagine 113, asparagine 157, and asparagine 165 are each glycosylated (N-linked (GlcNAc...) asparagine).

Belongs to the fasciclin-like AGP family.

It functions in the pathway secondary metabolite biosynthesis. Functionally, fasciclin-like arabinogalactan protein; part of the gene cluster that mediates the biosynthesis of elsinochrome C, a perelyenequinone phytotoxin structurally similar to cercosporin. The first step of elsinochrome C biosynthesis is performed by the polyketide synthase elcA which catalyzes the formation of nor-toralactone. The starter unit acyltransferase (SAT) domain of elcA initiates polyketide extension by the selective utilization of acetyl-CoA, which is elongated to the heptaketide in the beta-ketoacyl synthase (KS) domain by successive condensations with six malonyl units introduced by the malonyl acyltransferase (MAT) domain. The product template (PT) domain catalyzes C4-C9 and C2-C11 aldol cyclizations and dehydrations to a trihydroxynaphthalene, which is thought to be delivered to the thioesterase (TE) domain for product release. The bifunctional enzyme elcB then methylates nor-toralactone to toralactone before conducting an unusual oxidative aromatic ring opening. The next step in perylenequinone biosynthesis is an O-methylation at the nascent OH-6 of the elcB product performed by the O-methyltransferase elcD. The oxidative coupling of the two monomeric naphthol units in perylenequinone biosynthesis is catalyzed by the FAD-dependent monooxygenase elcE and the multicopper oxidase elcG. ElcG might catalyze the first intermolecular coupling in a regio- and stereo-selective manner via a phenol radical coupling mechanism and the elcE could forge the second C-C bond intramolecularly via a hydride transfer mechanism. The fasciclin domain-containing protein elcF might also play a role duting this step. The last piece of the puzzle in the biosynthesis of elsinochrome C is the additional annulation by enolate coupling to afford the dihydrobenzo(ghi)perylenequinone system, catalyzed by the FAD-dependent monooxygenase elcH. This chain is Fasciclin-like arabinogalactan protein elcF, found in Phaeosphaeria nodorum (strain SN15 / ATCC MYA-4574 / FGSC 10173) (Glume blotch fungus).